Here is a 276-residue protein sequence, read N- to C-terminus: Diaminopimelate epimerase (276 aa).

Substrate contacts are provided by N13, Q46, and N66. C75 acts as the Proton donor in catalysis. Substrate is bound by residues 76-77 (GN), N159, N192, and 210-211 (ER). C219 acts as the Proton acceptor in catalysis. Residue 220–221 (GT) coordinates substrate.

Belongs to the diaminopimelate epimerase family. In terms of assembly, homodimer.

It localises to the cytoplasm. The enzyme catalyses (2S,6S)-2,6-diaminopimelate = meso-2,6-diaminopimelate. It participates in amino-acid biosynthesis; L-lysine biosynthesis via DAP pathway; DL-2,6-diaminopimelate from LL-2,6-diaminopimelate: step 1/1. In terms of biological role, catalyzes the stereoinversion of LL-2,6-diaminopimelate (L,L-DAP) to meso-diaminopimelate (meso-DAP), a precursor of L-lysine and an essential component of the bacterial peptidoglycan. This chain is Diaminopimelate epimerase, found in Pseudomonas fluorescens (strain Pf0-1).